Consider the following 132-residue polypeptide: uncharacterized protein (132 aa).

This is an uncharacterized protein from Sinorhizobium fredii (strain NBRC 101917 / NGR234).